Reading from the N-terminus, the 339-residue chain is Tetraacyldisaccharide 4'-kinase (339 aa).

Residue 62 to 69 (VAGGTGKT) coordinates ATP.

The protein belongs to the LpxK family.

The enzyme catalyses a lipid A disaccharide + ATP = a lipid IVA + ADP + H(+). Its pathway is glycolipid biosynthesis; lipid IV(A) biosynthesis; lipid IV(A) from (3R)-3-hydroxytetradecanoyl-[acyl-carrier-protein] and UDP-N-acetyl-alpha-D-glucosamine: step 6/6. Transfers the gamma-phosphate of ATP to the 4'-position of a tetraacyldisaccharide 1-phosphate intermediate (termed DS-1-P) to form tetraacyldisaccharide 1,4'-bis-phosphate (lipid IVA). This Xylella fastidiosa (strain M12) protein is Tetraacyldisaccharide 4'-kinase.